Reading from the N-terminus, the 403-residue chain is Acetate kinase (403 aa).

Asparagine 7 contacts Mg(2+). Lysine 14 contributes to the ATP binding site. Position 90 (arginine 90) interacts with substrate. Aspartate 147 serves as the catalytic Proton donor/acceptor. ATP contacts are provided by residues 207–211 (HIGNG), 283–285 (DMR), and 331–335 (GVGEN). Residue glutamate 386 coordinates Mg(2+).

It belongs to the acetokinase family. Homodimer. It depends on Mg(2+) as a cofactor. Mn(2+) serves as cofactor.

The protein localises to the cytoplasm. The enzyme catalyses acetate + ATP = acetyl phosphate + ADP. It participates in metabolic intermediate biosynthesis; acetyl-CoA biosynthesis; acetyl-CoA from acetate: step 1/2. Catalyzes the formation of acetyl phosphate from acetate and ATP. Can also catalyze the reverse reaction. The sequence is that of Acetate kinase from Thermotoga sp. (strain RQ2).